Here is a 549-residue protein sequence, read N- to C-terminus: Cation/acetate symporter ActP (549 aa).

The Periplasmic portion of the chain corresponds to 1-32; the sequence is MKRVLTALAATLPFAANAADAISGAVERQPTN. The chain crosses the membrane as a helical span at residues 33 to 55; the sequence is WQAIIMFLIFVVFTLGITYWASK. Over 56–75 the chain is Cytoplasmic; that stretch reads RVRSRNDYYTAGGNITGFQN. The chain crosses the membrane as a helical span at residues 76 to 98; it reads GLAIAGDYMSAASFLGISALVFT. Topologically, residues 99 to 102 are periplasmic; it reads SGYD. A helical membrane pass occupies residues 103-125; sequence GLIYSLGFLVGWPIILFLIAERL. Residues 126-145 lie on the Cytoplasmic side of the membrane; that stretch reads RNLGRYTFADVASYRLKQGP. A helical membrane pass occupies residues 146-168; the sequence is IRILSACGSLVVVALYLIAQMVG. Topologically, residues 169-182 are periplasmic; it reads AGKLIELLFGLNYH. Residues 183 to 205 form a helical membrane-spanning segment; sequence IAVVLVGVLMMMYVLFGGMLATT. At 206–211 the chain is on the cytoplasmic side; that stretch reads WVQIIK. A helical membrane pass occupies residues 212-234; it reads AVLLLFGASFMAFMVMKHVGFSF. Topologically, residues 235–263 are periplasmic; that stretch reads NNLFSEAMAVHPKGVDIMKPGGLVKDPIS. A helical transmembrane segment spans residues 264–286; it reads ALSLGLGLMFGTAGLPHILMHFF. At 287–297 the chain is on the cytoplasmic side; it reads TVSDAREARKS. Residues 298–320 traverse the membrane as a helical segment; it reads VFYATGFMGYFYILTFIIGFGAI. The Periplasmic portion of the chain corresponds to 321–358; it reads MLVGANPEYKDAAGHLIGGNNMAAVHLANAVGGNLFLG. A helical membrane pass occupies residues 359–381; that stretch reads FISAVAFATILAVVAGLTLAGAS. The Cytoplasmic segment spans residues 382 to 401; sequence AVSHDLYANVFKKGATEREE. A helical transmembrane segment spans residues 402 to 424; the sequence is LRVSKITVLILGVIAIILGVLFE. Topologically, residues 425–427 are periplasmic; it reads NQN. The helical transmembrane segment at 428–450 threads the bilayer; the sequence is IAFMVGLAFAIAASCNFPIILLS. Residues 451-461 are Cytoplasmic-facing; it reads MYWSKLTTRGA. A helical transmembrane segment spans residues 462 to 484; it reads MLGGWLGLITAVVLMILGPTIWV. The Periplasmic segment spans residues 485-493; the sequence is QILGHEKAI. Residues 494 to 516 traverse the membrane as a helical segment; it reads FPYEYPALFSISVAFLGIWLFSA. Residues 517–549 are Cytoplasmic-facing; it reads TDNSAEGARERELFRAQFIRSQTGFGVEQGRAH.

Belongs to the sodium:solute symporter (SSF) (TC 2.A.21) family.

The protein resides in the cell inner membrane. Transports acetate. The polypeptide is Cation/acetate symporter ActP (actP) (Escherichia coli O6:H1 (strain CFT073 / ATCC 700928 / UPEC)).